The sequence spans 164 residues: Seripauperin-21 (164 aa).

It belongs to the SRP1/TIP1 family. Seripauperin subfamily.

The protein is Seripauperin-21 (PAU21) of Saccharomyces cerevisiae (strain ATCC 204508 / S288c) (Baker's yeast).